The chain runs to 809 residues: E3 ubiquitin-protein ligase RSP5 (809 aa).

Residues 1–105 (MPSSISVKLV…GHLDEDTATS (105 aa)) form the C2 domain. Disordered stretches follow at residues 99–122 (DEDT…KKSN), 139–240 (PSSS…RRTD), and 257–298 (WKRP…DNSS). Residues 108–122 (RPREETITRDLKKSN) are compositionally biased toward basic and acidic residues. Over residues 139–148 (PSSSPHSQAP) the composition is skewed to polar residues. Over residues 149–183 (SGHTASSSTNTSSTTRTNGHSTSSTRNHSTSHPSR) the composition is skewed to low complexity. Residues 184–196 (GTAQAVESTLQSG) show a composition bias toward polar residues. Residues 197-219 (TTAATNTATTSHRSTNSTSSATR) show a composition bias toward low complexity. 3 consecutive WW domains span residues 229 to 262 (GRLP…RPTL), 331 to 364 (GELP…DPRR), and 387 to 420 (GPLP…DPRL). K258 participates in a covalent cross-link: Glycyl lysine isopeptide (Lys-Gly) (interchain with G-Cter in ubiquitin). The HECT domain occupies 705 to 809 (YRGYQESDEV…VEETIGFGQE (105 aa)). Residue C777 is the Glycyl thioester intermediate of the active site.

Belongs to the RSP5/NEDD4 family. In terms of assembly, component of the RSP5-BUL1/2 ubiquitin ligase complex composed of at least RSP5 and BUL1 or BUL2. Component of the RSP5-UBA1-UBC5 ubiquitin ligase complex composed of E3 RSP5, E1 UBA1 and E2 UBC5. Also forms a ternary complex with RUP1 and UBP2. Interacts (via WW domains) with LSB1. Interacts (via WW domains) with PIN3/LSB2. Interacts (via WW domains) with RCR1 (via PY motifs). Interacts with UBP2; the interaction is direct. Interacts with HSE1. Interacts with LAS17. Interacts with ROG3. Interacts with ROD1. Interacts with RVS167. Interacts with ubiquitin. The ubiquitination appears to be the result of an intramolecular transfer of ubiquitin.

The protein resides in the cytoplasm. The protein localises to the nucleus. It localises to the cytoskeleton. Its subcellular location is the actin patch. The enzyme catalyses S-ubiquitinyl-[E2 ubiquitin-conjugating enzyme]-L-cysteine + [acceptor protein]-L-lysine = [E2 ubiquitin-conjugating enzyme]-L-cysteine + N(6)-ubiquitinyl-[acceptor protein]-L-lysine.. It participates in protein modification; protein ubiquitination. Functionally, E3 ubiquitin-protein ligase which accepts ubiquitin from an E2 ubiquitin-conjugating enzyme in the form of a thioester and then directly transfers the ubiquitin to targeted substrates. Component of a RSP5 ubiquitin ligase complex which specifies polyubiquitination and intracellular trafficking of the general amino acid permease GAP1 as well as other cell surface proteins like GAP1, FUR4, MAL61, PMA1 and STE2. The RSP5-BUL1/2 complex is also necessary for the heat-shock element (HSE)-mediated gene expression, nitrogen starvation GLN3-dependent transcription, pressure-induced differential regulation of the two tryptophan permeases TAT1 and TAT2 and sorting efficiency into multivesicular bodies. The RSP5-UBA1-UBC5 ubiquitin ligase complex ubiquitinates RPO21 forming 'Lys-63'-linked polyubiquitin chains. Plays a role in tolerance to o-dinitrobenzene. Involved in actin cytoskeleton organization and dynamics. Ubiquitinates the LAS17-binding proteins LSB1 and PIN3/LSB2 without directing them for degradation and affects LAS17 levels in a SLA1-dependent and LSB1/2-independent manner. Also involved in the degradation of non-functional 18S rRNAs in response to stalled ribosomes by mediating polyubiquitination of monoubiquitinated RPS3/uS3: mediates formation of 'Lys-63'-linked polyubiquitin chains on monoubiquitined RPS3/uS3, promoting the degradation of non-functional 18S rRNAs. The polypeptide is E3 ubiquitin-protein ligase RSP5 (RSP5) (Saccharomyces cerevisiae (strain ATCC 204508 / S288c) (Baker's yeast)).